The chain runs to 105 residues: Pyrimidine/purine nucleoside phosphorylase (105 aa).

Belongs to the nucleoside phosphorylase PpnP family.

It catalyses the reaction a purine D-ribonucleoside + phosphate = a purine nucleobase + alpha-D-ribose 1-phosphate. It carries out the reaction adenosine + phosphate = alpha-D-ribose 1-phosphate + adenine. The enzyme catalyses cytidine + phosphate = cytosine + alpha-D-ribose 1-phosphate. The catalysed reaction is guanosine + phosphate = alpha-D-ribose 1-phosphate + guanine. It catalyses the reaction inosine + phosphate = alpha-D-ribose 1-phosphate + hypoxanthine. It carries out the reaction thymidine + phosphate = 2-deoxy-alpha-D-ribose 1-phosphate + thymine. The enzyme catalyses uridine + phosphate = alpha-D-ribose 1-phosphate + uracil. The catalysed reaction is xanthosine + phosphate = alpha-D-ribose 1-phosphate + xanthine. Functionally, catalyzes the phosphorolysis of diverse nucleosides, yielding D-ribose 1-phosphate and the respective free bases. Can use uridine, adenosine, guanosine, cytidine, thymidine, inosine and xanthosine as substrates. Also catalyzes the reverse reactions. The protein is Pyrimidine/purine nucleoside phosphorylase of Clostridioides difficile (strain 630) (Peptoclostridium difficile).